The primary structure comprises 413 residues: Multifunctional CCA protein (413 aa).

Gly8 and Arg11 together coordinate ATP. Gly8 and Arg11 together coordinate CTP. Residues Asp21 and Asp23 each coordinate Mg(2+). 3 residues coordinate ATP: Arg91, Arg143, and Arg146. Arg91, Arg143, and Arg146 together coordinate CTP. One can recognise an HD domain in the interval 232-333 (TGVHVMMVVD…VRLFERSDAL (102 aa)).

It belongs to the tRNA nucleotidyltransferase/poly(A) polymerase family. Bacterial CCA-adding enzyme type 1 subfamily. Monomer. Can also form homodimers and oligomers. Mg(2+) serves as cofactor. It depends on Ni(2+) as a cofactor.

The catalysed reaction is a tRNA precursor + 2 CTP + ATP = a tRNA with a 3' CCA end + 3 diphosphate. The enzyme catalyses a tRNA with a 3' CCA end + 2 CTP + ATP = a tRNA with a 3' CCACCA end + 3 diphosphate. Catalyzes the addition and repair of the essential 3'-terminal CCA sequence in tRNAs without using a nucleic acid template. Adds these three nucleotides in the order of C, C, and A to the tRNA nucleotide-73, using CTP and ATP as substrates and producing inorganic pyrophosphate. tRNA 3'-terminal CCA addition is required both for tRNA processing and repair. Also involved in tRNA surveillance by mediating tandem CCA addition to generate a CCACCA at the 3' terminus of unstable tRNAs. While stable tRNAs receive only 3'-terminal CCA, unstable tRNAs are marked with CCACCA and rapidly degraded. The polypeptide is Multifunctional CCA protein (Burkholderia cenocepacia (strain ATCC BAA-245 / DSM 16553 / LMG 16656 / NCTC 13227 / J2315 / CF5610) (Burkholderia cepacia (strain J2315))).